We begin with the raw amino-acid sequence, 116 residues long: Large ribosomal subunit protein bL17 (116 aa).

The protein belongs to the bacterial ribosomal protein bL17 family. As to quaternary structure, part of the 50S ribosomal subunit. Contacts protein L32.

This is Large ribosomal subunit protein bL17 from Helicobacter acinonychis (strain Sheeba).